Consider the following 433-residue polypeptide: MTDIFNITHSEEVFSSALKLMPGGVSSPVRAFKSVGGQPIVFDRVKGPFAWDVDGNRYIDYIGSWGPAICGHAHPEVITALQEAIEKGTSFGAPCVQENKLAEMVIDAVPSVEMVRFVNSGTEACMAVLRLMRAFTGRDKVIKFDGCYHGHADMFLVKAGSGVATLGLPDSPGVPRTTTANTLTAPYNDLEAVKKLFSENPDAISGVILEPIVGNAGFITPEPGFLEGLRELTTENGSLLVFDEVMTGFRISYGGAQEKFGVTPDLTTLGKVIGGGLPVGAYGGRKEIMSMVAPSGPVYQAGTLSGNPLAMTAGIKTLELLKQEGTYEKMGLATSRLIEGIMQSAENNGIAINGGSVSAMFGFFLCEGPVRNFEEAKTNNSELFGKLHREMIKRGVYLAPSPFEAGFTSLAHSEEEIDRTIEAFDQSFSVIKN.

N6-(pyridoxal phosphate)lysine is present on Lys-271.

This sequence belongs to the class-III pyridoxal-phosphate-dependent aminotransferase family. HemL subfamily. As to quaternary structure, homodimer. The cofactor is pyridoxal 5'-phosphate.

It localises to the cytoplasm. The enzyme catalyses (S)-4-amino-5-oxopentanoate = 5-aminolevulinate. The protein operates within porphyrin-containing compound metabolism; protoporphyrin-IX biosynthesis; 5-aminolevulinate from L-glutamyl-tRNA(Glu): step 2/2. It participates in porphyrin-containing compound metabolism; chlorophyll biosynthesis. In Prochlorococcus marinus (strain MIT 9515), this protein is Glutamate-1-semialdehyde 2,1-aminomutase.